We begin with the raw amino-acid sequence, 215 residues long: Serine acetyltransferase (215 aa).

It belongs to the transferase hexapeptide repeat family.

Its subcellular location is the cytoplasm. It carries out the reaction L-serine + acetyl-CoA = O-acetyl-L-serine + CoA. The protein operates within amino-acid biosynthesis; L-cysteine biosynthesis; L-cysteine from L-serine: step 1/2. This is Serine acetyltransferase (cysE) from Staphylococcus aureus (strain MRSA252).